Consider the following 139-residue polypeptide: ATP synthase epsilon chain (139 aa).

It belongs to the ATPase epsilon chain family. F-type ATPases have 2 components, CF(1) - the catalytic core - and CF(0) - the membrane proton channel. CF(1) has five subunits: alpha(3), beta(3), gamma(1), delta(1), epsilon(1). CF(0) has three main subunits: a, b and c.

The protein resides in the cell inner membrane. Functionally, produces ATP from ADP in the presence of a proton gradient across the membrane. This is ATP synthase epsilon chain from Pseudomonas putida (strain GB-1).